Consider the following 426-residue polypeptide: Histidine--tRNA ligase (426 aa).

It belongs to the class-II aminoacyl-tRNA synthetase family. In terms of assembly, homodimer.

The protein resides in the cytoplasm. It catalyses the reaction tRNA(His) + L-histidine + ATP = L-histidyl-tRNA(His) + AMP + diphosphate + H(+). This is Histidine--tRNA ligase from Picosynechococcus sp. (strain ATCC 27264 / PCC 7002 / PR-6) (Agmenellum quadruplicatum).